The sequence spans 84 residues: Putative membrane protein insertion efficiency factor (84 aa).

The segment at 60–84 (WSQPGEDPVPDHFSLKRNDTRKQSH) is disordered. A compositionally biased stretch (basic and acidic residues) spans 68–84 (VPDHFSLKRNDTRKQSH).

It belongs to the UPF0161 family.

It localises to the cell membrane. Could be involved in insertion of integral membrane proteins into the membrane. In Streptococcus gordonii (strain Challis / ATCC 35105 / BCRC 15272 / CH1 / DL1 / V288), this protein is Putative membrane protein insertion efficiency factor.